The sequence spans 156 residues: Transcription elongation factor GreA (156 aa).

The stretch at 46-67 (AEYHAAREKQSFIEGRIKELEA) forms a coiled coil.

This sequence belongs to the GreA/GreB family.

Necessary for efficient RNA polymerase transcription elongation past template-encoded arresting sites. The arresting sites in DNA have the property of trapping a certain fraction of elongating RNA polymerases that pass through, resulting in locked ternary complexes. Cleavage of the nascent transcript by cleavage factors such as GreA or GreB allows the resumption of elongation from the new 3'terminus. GreA releases sequences of 2 to 3 nucleotides. In Cereibacter sphaeroides (strain ATCC 17029 / ATH 2.4.9) (Rhodobacter sphaeroides), this protein is Transcription elongation factor GreA.